Reading from the N-terminus, the 500-residue chain is L-2-amino-4-chloropent-4-enoate dechlorinase/desaturase (500 aa).

Position 311 is an N6-(pyridoxal phosphate)lysine (Lys311).

Belongs to the trans-sulfuration enzymes family. Pyridoxal 5'-phosphate serves as cofactor.

It carries out the reaction L-2-amino-4-chloropent-4-enoate = L-propargylglycine + chloride + H(+). The protein operates within amino-acid metabolism. It participates in antibiotic biosynthesis. Its function is as follows. Involved in the biosynthesis of terminal alkyne-containing amino acids such as L-propargylglycine (Pra) and L-beta-ethynylserine, that are produced as antibiotics by S.cattleya. Catalyzes gamma-elimination of chloride from 4-chloro-allyl-L-glycine (also named L-2-amino-4-chloropent-4-enoate), followed by an isomerization, to form the terminal-alkyne product L-propargylglycine. In Streptantibioticus cattleyicolor (strain ATCC 35852 / DSM 46488 / JCM 4925 / NBRC 14057 / NRRL 8057) (Streptomyces cattleya), this protein is L-2-amino-4-chloropent-4-enoate dechlorinase/desaturase.